An 81-amino-acid polypeptide reads, in one-letter code: Mipartoxin-2 (81 aa).

An N-terminal signal peptide occupies residues 1 to 21; the sequence is MKTLLLTLVVVTIVCLDLGNS. Intrachain disulfides connect C24–C42, C35–C61, C65–C73, and C74–C79.

This sequence belongs to the three-finger toxin family. Short-chain subfamily. As to expression, expressed by the venom gland.

Its subcellular location is the secreted. Snake venom neurotoxin that blocks neuromuscular transmission, presenting a postsynaptic action through the nicotinic acetylcholine receptor (nAChR). Has no cytotoxic activity. The sequence is that of Mipartoxin-2 from Micrurus mipartitus (Red-tailed coral snake).